The primary structure comprises 511 residues: Prolyl 3-hydroxylase OGFOD1 (511 aa).

A disordered region spans residues 1–20 (MTGKRGTAAGTDGSGNKKGK). Residues 138 to 240 (KTVDISCAQY…RLSVSGWFHG (103 aa)) enclose the Fe2OG dioxygenase domain. 2 residues coordinate Fe cation: histidine 156 and aspartate 158. Tyrosine 170 contributes to the 2-oxoglutarate binding site. Residue histidine 219 participates in Fe cation binding. Position 231 (arginine 231) interacts with 2-oxoglutarate. A disordered region spans residues 372–403 (NEESDEGEGPSEPNTVSQQGASSEDDKVPSCS).

It belongs to the TPA1 family. Monomer. It depends on Fe(2+) as a cofactor. L-ascorbate serves as cofactor.

It is found in the cytoplasm. The protein resides in the nucleus. It catalyses the reaction [ribosomal protein uS12]-L-proline + 2-oxoglutarate + O2 = [ribosomal protein uS12]-(3S)-3-hydroxy-L-proline + succinate + CO2. Prolyl 3-hydroxylase that catalyzes 3-hydroxylation of 'Pro-62' of small ribosomal subunit uS12 (rps23), thereby regulating protein translation termination efficiency. Involved in stress granule formation. In Xenopus laevis (African clawed frog), this protein is Prolyl 3-hydroxylase OGFOD1 (ogfod1).